A 293-amino-acid chain; its full sequence is 4-diphosphocytidyl-2-C-methyl-D-erythritol kinase (293 aa).

Residue lysine 23 is part of the active site. Position 109–119 (109–119 (PVAAGIGGGSA)) interacts with ATP. Aspartate 151 is an active-site residue.

It belongs to the GHMP kinase family. IspE subfamily.

It carries out the reaction 4-CDP-2-C-methyl-D-erythritol + ATP = 4-CDP-2-C-methyl-D-erythritol 2-phosphate + ADP + H(+). The protein operates within isoprenoid biosynthesis; isopentenyl diphosphate biosynthesis via DXP pathway; isopentenyl diphosphate from 1-deoxy-D-xylulose 5-phosphate: step 3/6. Functionally, catalyzes the phosphorylation of the position 2 hydroxy group of 4-diphosphocytidyl-2C-methyl-D-erythritol. The chain is 4-diphosphocytidyl-2-C-methyl-D-erythritol kinase from Rhizorhabdus wittichii (strain DSM 6014 / CCUG 31198 / JCM 15750 / NBRC 105917 / EY 4224 / RW1) (Sphingomonas wittichii).